The chain runs to 340 residues: Dihydroorotate dehydrogenase (quinone) (340 aa).

FMN contacts are provided by residues 62-66 (AGLDK) and T86. K66 serves as a coordination point for substrate. 111-115 (NRMGF) is a binding site for substrate. FMN-binding residues include N139 and N172. A substrate-binding site is contributed by N172. The Nucleophile role is filled by S175. N177 is a binding site for substrate. Residues K217 and T245 each coordinate FMN. Substrate is bound at residue 246-247 (NT). FMN is bound by residues G268, G297, and 318 to 319 (YS).

It belongs to the dihydroorotate dehydrogenase family. Type 2 subfamily. In terms of assembly, monomer. The cofactor is FMN.

The protein localises to the cell membrane. The enzyme catalyses (S)-dihydroorotate + a quinone = orotate + a quinol. It participates in pyrimidine metabolism; UMP biosynthesis via de novo pathway; orotate from (S)-dihydroorotate (quinone route): step 1/1. Catalyzes the conversion of dihydroorotate to orotate with quinone as electron acceptor. This chain is Dihydroorotate dehydrogenase (quinone), found in Alkalilimnicola ehrlichii (strain ATCC BAA-1101 / DSM 17681 / MLHE-1).